Reading from the N-terminus, the 201-residue chain is MASKLRLGVAGPVGSGKTALVEALCRELCERLELAVVTNDIYTQEDAQFLTRAGVLPPERIRGVETGGCPHTAIREDCSINRAAVGDLEAQFPGLDLVLVESGGDNLAASFSPELVDLCIYVIDVAAGDKIPRKGGPGITRSDLLVINKIDLAPLVGADLSVMEHDTQRMRGDRPWCFTNLKNGVGLNQVVEFVLQQLPNV.

Position 11-18 (11-18 (GPVGSGKT)) interacts with GTP.

This sequence belongs to the SIMIBI class G3E GTPase family. UreG subfamily. In terms of assembly, homodimer. UreD, UreF and UreG form a complex that acts as a GTP-hydrolysis-dependent molecular chaperone, activating the urease apoprotein by helping to assemble the nickel containing metallocenter of UreC. The UreE protein probably delivers the nickel.

Its subcellular location is the cytoplasm. In terms of biological role, facilitates the functional incorporation of the urease nickel metallocenter. This process requires GTP hydrolysis, probably effectuated by UreG. This is Urease accessory protein UreG from Synechococcus sp. (strain CC9902).